Here is a 584-residue protein sequence, read N- to C-terminus: uncharacterized protein (584 aa).

Disordered stretches follow at residues 123-156 (LSCS…PSSP), 209-264 (KIVT…INGG), and 355-479 (STQL…ITPT). Low complexity-rich tracts occupy residues 237-260 (SLSF…PKSS) and 366-376 (SISAATTTTIT). Polar residues-rich tracts occupy residues 377-388 (PHNNNSTMTTKT) and 395-419 (DTSN…STTP). Low complexity predominate over residues 425–479 (MSMTPLSSSSSSSTTPSKFINPLPSSSSKTTTTITNSKRLSTLSKPSPITPITPT).

This is an uncharacterized protein from Dictyostelium discoideum (Social amoeba).